The chain runs to 530 residues: Inactive ubiquitin carboxyl-terminal hydrolase 17-like protein 4 (530 aa).

Residues 80–375 enclose the USP domain; it reads AGLQNMGNTC…QAYVLFYIQK (296 aa). A compositionally biased stretch (basic and acidic residues) spans 382–392; it reads SESVSRGREPR. Disordered stretches follow at residues 382–410 and 493–530; these read SESV…ELKR and NSTD…LVCQ. The segment covering 495-510 has biased composition (polar residues); it reads TDQESMNTGTLASLQG. Positions 511 to 524 are enriched in basic residues; that stretch reads RTRRSKGKNKHSKR.

It belongs to the peptidase C19 family. USP17 subfamily.

It localises to the nucleus. Its subcellular location is the endoplasmic reticulum. This chain is Inactive ubiquitin carboxyl-terminal hydrolase 17-like protein 4 (USP17L4), found in Homo sapiens (Human).